The following is a 1215-amino-acid chain: MASQVLVYPPYVYQTQSSAFCSVKKLKVEPSSCVFQERNYPRTYVNGRNFGNSHPPTKGSAFQTKIPFNRPRGHNFSLQTSAVVLKNTAGATKVIAAQAQQAHVQAPQIGAWRNRLHFLEGPQRCGLKRKSEELDNHSSAMQIVDELSILPAMLQTNMGNPVTVVTATTGSKQNCTTGEGDYQLVQHEVLCSMKNTYEVLDFLGRGTFGQVVKCWKRGTNEIVAIKILKNHPSYARQGQIEVSILARLSTENADEYNFVRAYECFQHRNHTCLVFEMLEQNLYDFLKQNKFSPLPLKVIRPILQQVATALKKLKSLGLIHADLKPENIMLVDPVRQPYRVKVIDFGSASHVSKTVCSTYLQSRYYRAPEIILGLPFCEAIDMWSLGCVIAELFLGWPLYPGALEYDQIRYISQTQGLPGEQLLNVGTKSTRFFCKETDMSHSGWRLKTLEEHEAETGMKSKEARKYIFNSLDDVAHVNTVMDLEGSDLLAEKADRREFVSLLKKMLLIDADLRITPAETLNHPFVNMKHLLDFPHSNHVKSCFHIMDICKSHLNSCDTNNHNKTSLLRPVASSSTATLTANFTKIGTLRSQALTTSAHSVVHHGIPLQAGTAQFGCGDAFQQTLIICPPAIQGIPATHGKPTSYSIRVDNTVPLVTQAPAVQPLQIRPGVLSQTWSGRTQQMLVPAWQQVTPLAPATTTLTSESVAGSHRLGDWGKMISCSNHYNSVMPQPLLTNQITLSAPQPVSVGIAHVVWPQPATTKKNKQCQNRGILVKLMEWEPGREEINAFSWSNSLQNTNIPHSAFISPKIINGKDVEEVSCIETQDNQNSEGEARNCCETSIRQDSDSSVSDKQRQTIIIADSPSPAVSVITISSDTDEEETSQRHSLRECKGSLDCEACQSTLNIDRMCSLSSPDSTLSTSSSGQSSPSPCKRPNSMSDEEQESSCDTVDGSPTSDSSGHDSPFAESTFVEDTHENTELVSSADTETKPAVCSVVVPPVELENGLNADEHMANTDSICQPLIKGRSAPGRLNQPSAVGTRQQKLTSAFQQQHLNFSQVQHFGSGHQEWNGNFGHRRQQAYIPTSVTSNPFTLSHGSPNHTAVHAHLAGNTHLGGQPTLLPYPSSATLSSAAPVAHLLASPCTSRPMLQHPTYNISHPSGIVHQVPVGLNPRLLPSPTIHQTQYKPIFPPHSYIAASPAYTGFPLSPTKLSQYPYM.

K27 participates in a covalent cross-link: Glycyl lysine isopeptide (Lys-Gly) (interchain with G-Cter in SUMO2). The region spanning 197–525 (YEVLDFLGRG…PAETLNHPFV (329 aa)) is the Protein kinase domain. Residues 203-211 (LGRGTFGQV) and K226 contribute to the ATP site. D322 (proton acceptor) is an active-site residue. Y359 bears the Phosphotyrosine mark. Residues 767 to 944 (QNRGILVKLM…NSMSDEEQES (178 aa)) form an interaction with AR region. Positions 796 to 891 (NTNIPHSAFI…SQRHSLRECK (96 aa)) are interaction with FAS. The segment at 855-1011 (QTIIIADSPS…ENGLNADEHM (157 aa)) is required for localization to nuclear speckles. The segment at 866–918 (AVSVITISSDTDEEETSQRHSLRECKGSLDCEACQSTLNIDRMCSLSSPDSTL) is SUMO interaction motifs (SIM); required for nuclear localization and kinase activity. Residues 870–880 (ITISSDTDEEE) form an interaction with UBL1 region. A compositionally biased stretch (low complexity) spans 912 to 929 (SSPDSTLSTSSSGQSSPS). The segment at 912-987 (SSPDSTLSTS…ELVSSADTET (76 aa)) is disordered. The segment covering 945–957 (SCDTVDGSPTSDS) has biased composition (polar residues). K1208 is covalently cross-linked (Glycyl lysine isopeptide (Lys-Gly) (interchain with G-Cter in SUMO)).

It belongs to the protein kinase superfamily. CMGC Ser/Thr protein kinase family. HIPK subfamily. In terms of assembly, interacts with Nkx1-2. Interacts with FAS and DAXX. Probably part of a complex consisting of HIPK3, FAS and FADD. Interacts with and stabilizes ligand-bound androgen receptor (AR). Interacts with UBL1/SUMO-1. Binds to NR5A1/SF1, SPEN/MINT and RUNX2. Autophosphorylated, but autophosphorylation is not required for catalytic activity. Post-translationally, may be sumoylated. As to expression, overexpressed in multidrug resistant cells. Highly expressed in heart and skeletal muscle, and at lower levels in placenta, pancreas, brain, spleen, prostate, thymus, testis, small intestine, colon and leukocytes. Not found in liver and lung.

It localises to the cytoplasm. Its subcellular location is the nucleus. The catalysed reaction is L-seryl-[protein] + ATP = O-phospho-L-seryl-[protein] + ADP + H(+). It carries out the reaction L-threonyl-[protein] + ATP = O-phospho-L-threonyl-[protein] + ADP + H(+). Functionally, serine/threonine-protein kinase involved in transcription regulation, apoptosis and steroidogenic gene expression. Phosphorylates JUN and RUNX2. Seems to negatively regulate apoptosis by promoting FADD phosphorylation. Enhances androgen receptor-mediated transcription. May act as a transcriptional corepressor for NK homeodomain transcription factors. The phosphorylation of NR5A1 activates SF1 leading to increased steroidogenic gene expression upon cAMP signaling pathway stimulation. In osteoblasts, supports transcription activation: phosphorylates RUNX2 that synergizes with SPEN/MINT to enhance FGFR2-mediated activation of the osteocalcin FGF-responsive element (OCFRE). This is Homeodomain-interacting protein kinase 3 (HIPK3) from Homo sapiens (Human).